Here is a 347-residue protein sequence, read N- to C-terminus: Dihydroorotase (347 aa).

Zn(2+) is bound by residues His14 and His16. Residues 16–18 (HLR) and Asn42 each bind substrate. 3 residues coordinate Zn(2+): Lys100, His137, and His175. Lys100 carries the N6-carboxylysine modification. Substrate is bound at residue His137. Residue Leu220 coordinates substrate. Asp248 lines the Zn(2+) pocket. Residue Asp248 is part of the active site. Residues His252 and Ala264 each coordinate substrate.

The protein belongs to the metallo-dependent hydrolases superfamily. DHOase family. Class II DHOase subfamily. As to quaternary structure, homodimer. Zn(2+) is required as a cofactor.

The catalysed reaction is (S)-dihydroorotate + H2O = N-carbamoyl-L-aspartate + H(+). It participates in pyrimidine metabolism; UMP biosynthesis via de novo pathway; (S)-dihydroorotate from bicarbonate: step 3/3. Its function is as follows. Catalyzes the reversible cyclization of carbamoyl aspartate to dihydroorotate. The protein is Dihydroorotase of Pseudomonas savastanoi pv. phaseolicola (strain 1448A / Race 6) (Pseudomonas syringae pv. phaseolicola (strain 1448A / Race 6)).